We begin with the raw amino-acid sequence, 310 residues long: Olfactory receptor 9Q1 (310 aa).

Over M1–L25 the chain is Extracellular. N5 carries an N-linked (GlcNAc...) asparagine glycan. A helical membrane pass occupies residues P26–I46. Over I47–Q54 the chain is Cytoplasmic. A helical transmembrane segment spans residues L55 to S75. Topologically, residues I76–A99 are extracellular. The cysteines at positions 97 and 189 are disulfide-linked. The chain crosses the membrane as a helical span at residues Q100 to Y120. Residues D121–Q139 are Cytoplasmic-facing. The helical transmembrane segment at A140–T160 threads the bilayer. Residues V161–V197 lie on the Extracellular side of the membrane. A helical transmembrane segment spans residues L198–S217. Topologically, residues Y218–T236 are cytoplasmic. A helical transmembrane segment spans residues F237–M257. The Extracellular segment spans residues Y258 to N270. Residues R271–L291 form a helical membrane-spanning segment. Topologically, residues R292–S310 are cytoplasmic.

This sequence belongs to the G-protein coupled receptor 1 family.

Its subcellular location is the cell membrane. Odorant receptor. This chain is Olfactory receptor 9Q1 (OR9Q1), found in Homo sapiens (Human).